The primary structure comprises 229 residues: Ras-related protein Rab-33B (229 aa).

GTP is bound by residues Asn-43, Val-44, Gly-45, Lys-46, Thr-47, Cys-48, Thr-62, and Thr-65. Residue Thr-47 coordinates Mg(2+). The Switch 1 motif lies at 56 to 68; the sequence is GRFPDRTEATIGV. Mg(2+)-binding residues include Thr-65 and Asp-88. A Switch 2 motif is present at residues 89-108; the sequence is TAGQERFRKSMVQHYYRNVH. GTP-binding residues include Gly-91, Asn-148, Lys-149, Asp-151, Ala-179, and Lys-180. Residues Cys-227 and Cys-229 are each lipidated (S-geranylgeranyl cysteine). Cys-229 is modified (cysteine methyl ester).

The protein belongs to the small GTPase superfamily. Rab family. Interacts (GTP- and GDP-bound forms) with ATG16L1; the complex consists of a tetramer where two RAB33B molecules bind independently one molecule of the ATG16L1 homodimer; the interaction promotes ATG12-ATG5-ATG16L1 complex recruitment to phagophores. Interacts with ATG16L2; however interaction is approximately hundred times lower than for ATG16L1. Interacts with RIC1 (via C-terminus domain); the interaction is direct with a preference for RAB33B-GTP. Interacts with RGP1. Mg(2+) serves as cofactor. Prenylated.

The protein localises to the golgi apparatus membrane. The protein resides in the golgi apparatus. It is found in the cis-Golgi network. It localises to the preautophagosomal structure membrane. It carries out the reaction GTP + H2O = GDP + phosphate + H(+). With respect to regulation, regulated by guanine nucleotide exchange factors (GEFs) which promote the exchange of bound GDP for free GTP. Regulated by GTPase activating proteins (GAPs) such as SGSM2 which increase the GTP hydrolysis activity. Inhibited by GDP dissociation inhibitors (GDIs). Functionally, the small GTPases Rab are key regulators of intracellular membrane trafficking, from the formation of transport vesicles to their fusion with membranes. Rabs cycle between an inactive GDP-bound form and an active GTP-bound form that is able to recruit to membranes different sets of downstream effectors directly responsible for vesicle formation, movement, tethering and fusion. RAB33B acts, in coordination with RAB6A, to regulate intra-Golgi retrograde trafficking. Participates in autophagosome formation by recruiting the ATG12-ATG5-ATG16L1 complex to phagophores, probably in a nucleotide-independent manner. The protein is Ras-related protein Rab-33B of Homo sapiens (Human).